The following is a 38-amino-acid chain: MTQPNPNKQSVELNRTSLFWGLLLIFVLAVLFSSYFFN.

Residues 17–37 traverse the membrane as a helical segment; sequence SLFWGLLLIFVLAVLFSSYFF.

It belongs to the PsbL family. In terms of assembly, PSII is composed of 1 copy each of membrane proteins PsbA, PsbB, PsbC, PsbD, PsbE, PsbF, PsbH, PsbI, PsbJ, PsbK, PsbL, PsbM, PsbT, PsbX, PsbY, PsbZ, Psb30/Ycf12, at least 3 peripheral proteins of the oxygen-evolving complex and a large number of cofactors. It forms dimeric complexes.

Its subcellular location is the plastid. The protein localises to the chloroplast thylakoid membrane. Its function is as follows. One of the components of the core complex of photosystem II (PSII). PSII is a light-driven water:plastoquinone oxidoreductase that uses light energy to abstract electrons from H(2)O, generating O(2) and a proton gradient subsequently used for ATP formation. It consists of a core antenna complex that captures photons, and an electron transfer chain that converts photonic excitation into a charge separation. This subunit is found at the monomer-monomer interface and is required for correct PSII assembly and/or dimerization. The protein is Photosystem II reaction center protein L of Zygnema circumcarinatum (Green alga).